A 917-amino-acid polypeptide reads, in one-letter code: Thiamine biosynthesis bifunctional protein ThiEC (917 aa).

The thiamine-phosphate synthase stretch occupies residues 1-243; it reads MSNEYPYASM…EGWKAVRGDK (243 aa). Residues 48–52 and Asp84 each bind 4-amino-2-methyl-5-(diphosphooxymethyl)pyrimidine; that span reads QLRAK. Mg(2+) is bound by residues Asp85 and Asp109. A 4-amino-2-methyl-5-(diphosphooxymethyl)pyrimidine-binding site is contributed by Ser128. A 2-[(2R,5Z)-2-carboxy-4-methylthiazol-5(2H)-ylidene]ethyl phosphate-binding site is contributed by 157–159; it reads STT. Lys160 lines the 4-amino-2-methyl-5-(diphosphooxymethyl)pyrimidine pocket. 2-[(2R,5Z)-2-carboxy-4-methylthiazol-5(2H)-ylidene]ethyl phosphate contacts are provided by residues Gly196 and 216–217; that span reads VS. A disordered region spans residues 256–311; the sequence is PATDTQAAQEGAAKPGSEATEKKFTNAKDAKDAQKLAKQQRVDIAARGSKQRDKAH. The tract at residues 271–917 is phosphomethylpyrimidine synthase; it reads GSEATEKKFT…GGKLYSTAQE (647 aa). Residues 274-290 are compositionally biased toward basic and acidic residues; that stretch reads ATEKKFTNAKDAKDAQK. Residues Asn487, Met516, Tyr545, His581, 601–603, 642–645, and Glu681 each bind 5-amino-1-(5-phospho-beta-D-ribosyl)imidazole; these read SRG and DGLR. His685 contributes to the Zn(2+) binding site. Residue Tyr708 coordinates 5-amino-1-(5-phospho-beta-D-ribosyl)imidazole. Residue His749 coordinates Zn(2+). Residues Cys829, Cys832, and Cys837 each coordinate [4Fe-4S] cluster.

It in the N-terminal section; belongs to the thiamine-phosphate synthase family. The protein in the C-terminal section; belongs to the ThiC family. Requires [4Fe-4S] cluster as cofactor.

It carries out the reaction 2-[(2R,5Z)-2-carboxy-4-methylthiazol-5(2H)-ylidene]ethyl phosphate + 4-amino-2-methyl-5-(diphosphooxymethyl)pyrimidine + 2 H(+) = thiamine phosphate + CO2 + diphosphate. The enzyme catalyses 2-(2-carboxy-4-methylthiazol-5-yl)ethyl phosphate + 4-amino-2-methyl-5-(diphosphooxymethyl)pyrimidine + 2 H(+) = thiamine phosphate + CO2 + diphosphate. The catalysed reaction is 4-methyl-5-(2-phosphooxyethyl)-thiazole + 4-amino-2-methyl-5-(diphosphooxymethyl)pyrimidine + H(+) = thiamine phosphate + diphosphate. It catalyses the reaction 5-amino-1-(5-phospho-beta-D-ribosyl)imidazole + S-adenosyl-L-methionine = 4-amino-2-methyl-5-(phosphooxymethyl)pyrimidine + CO + 5'-deoxyadenosine + formate + L-methionine + 3 H(+). It participates in cofactor biosynthesis; thiamine diphosphate biosynthesis; thiamine phosphate from 4-amino-2-methyl-5-diphosphomethylpyrimidine and 4-methyl-5-(2-phosphoethyl)-thiazole: step 1/1. Functionally, condenses 4-methyl-5-(beta-hydroxyethyl)thiazole monophosphate (THZ-P) and 2-methyl-4-amino-5-hydroxymethyl pyrimidine pyrophosphate (HMP-PP) to form thiamine monophosphate (TMP). Catalyzes the synthesis of the hydroxymethylpyrimidine phosphate (HMP-P) moiety of thiamine from aminoimidazole ribotide (AIR) in a radical S-adenosyl-L-methionine (SAM)-dependent reaction. The protein is Thiamine biosynthesis bifunctional protein ThiEC (thiE/thiC) of Bifidobacterium longum (strain NCC 2705).